The following is a 473-amino-acid chain: Probable cytosolic iron-sulfur protein assembly protein 1 (473 aa).

The interval Met-1–Trp-25 is disordered. WD repeat units follow at residues Lys-11–Thr-58 and Gly-62–Glu-104. Positions Gly-112–Asp-133 are disordered. The segment covering Asp-123–Asp-133 has biased composition (acidic residues). 4 WD repeats span residues Gly-144–Phe-183, Glu-191–Val-230, Gly-235–Pro-313, and Met-341–Val-380. The tract at residues Lys-377 to Pro-405 is disordered. The segment covering Ser-384 to Gly-400 has biased composition (basic and acidic residues). A WD 7 repeat occupies Ser-438–Arg-473.

The protein belongs to the WD repeat CIA1 family.

Its function is as follows. Essential component of the cytosolic iron-sulfur (Fe/S) protein assembly machinery. Required for the maturation of extramitochondrial Fe/S proteins. The chain is Probable cytosolic iron-sulfur protein assembly protein 1 from Coccidioides immitis (strain RS) (Valley fever fungus).